The sequence spans 515 residues: Histidine ammonia-lyase (515 aa).

The segment at residues 148–150 is a cross-link (5-imidazolinone (Ala-Gly)); the sequence is ASG. Position 149 is a 2,3-didehydroalanine (Ser) (S149).

Belongs to the PAL/histidase family. In terms of processing, contains an active site 4-methylidene-imidazol-5-one (MIO), which is formed autocatalytically by cyclization and dehydration of residues Ala-Ser-Gly.

The protein localises to the cytoplasm. It catalyses the reaction L-histidine = trans-urocanate + NH4(+). It participates in amino-acid degradation; L-histidine degradation into L-glutamate; N-formimidoyl-L-glutamate from L-histidine: step 1/3. This chain is Histidine ammonia-lyase, found in Pseudomonas syringae pv. tomato (strain ATCC BAA-871 / DC3000).